The chain runs to 197 residues: 3-isopropylmalate dehydratase small subunit (197 aa).

It belongs to the LeuD family. LeuD type 1 subfamily. In terms of assembly, heterodimer of LeuC and LeuD.

The catalysed reaction is (2R,3S)-3-isopropylmalate = (2S)-2-isopropylmalate. Its pathway is amino-acid biosynthesis; L-leucine biosynthesis; L-leucine from 3-methyl-2-oxobutanoate: step 2/4. Functionally, catalyzes the isomerization between 2-isopropylmalate and 3-isopropylmalate, via the formation of 2-isopropylmaleate. The sequence is that of 3-isopropylmalate dehydratase small subunit from Mycobacterium sp. (strain JLS).